We begin with the raw amino-acid sequence, 389 residues long: Maintenance of mitochondrial morphology protein 1-1 (389 aa).

Residues 1–22 (MSQFVLPAVASEGIINWPFLTG) are Lumenal-facing. Residues 23–43 (FMLGQFSVGLVLLIFVRFFIF) traverse the membrane as a helical segment. Residues 44-389 (SDQTEPDINT…YRSLQTSPRR (346 aa)) are Cytoplasmic-facing. The SMP-LTD domain maps to 83-278 (QPESLDWFSV…YPEYQQFELP (196 aa)). 2 disordered regions span residues 283–345 (KTSA…PKFI) and 360–389 (FYEM…SPRR). Over residues 330-341 (MSMSSQRPNINN) the composition is skewed to polar residues.

The protein belongs to the MMM1 family. Homodimer. Component of the ER-mitochondria encounter structure (ERMES) or MDM complex, composed of MMM1, MDM10, MDM12 and MDM34. An MMM1 homodimer associates with one molecule of MDM12 on each side in a pairwise head-to-tail manner, and the SMP-LTD domains of MMM1 and MDM12 generate a continuous hydrophobic tunnel for phospholipid trafficking.

It is found in the endoplasmic reticulum membrane. Component of the ERMES/MDM complex, which serves as a molecular tether to connect the endoplasmic reticulum (ER) and mitochondria. Components of this complex are involved in the control of mitochondrial shape and protein biogenesis, and function in nonvesicular lipid trafficking between the ER and mitochondria. The MDM12-MMM11 subcomplex functions in the major beta-barrel assembly pathway that is responsible for biogenesis of all outer membrane beta-barrel proteins, and acts in a late step after the SAM complex. The MDM10-MDM12-MMM1 subcomplex further acts in the TOM40-specific pathway after the action of the MDM12-MMM1 complex. Essential for establishing and maintaining the structure of mitochondria and maintenance of mtDNA nucleoids. The chain is Maintenance of mitochondrial morphology protein 1-1 from Yarrowia lipolytica (strain CLIB 122 / E 150) (Yeast).